A 313-amino-acid polypeptide reads, in one-letter code: MSSREIRIATRKSALALWQAEYVKARLEQAHPGLKVSLVPMVSRGDKLLDSPLSKIGGKGLFVKELETALLENEADIAVHSMKDVPMDFPEGLGLFCICEREDPRDAFVSNTYASLDALPLGSIVGTSSLRRQAQLLTRRPDLQIRFLRGNVNTRLAKLDAGEYDAIILAAAGLIRLGFEDRITSAISVEDSLPAGGQGAVGIECRTADSDIHALLKPLDHHDTEVRVTAERALNKHLNGGCQVPIACYAVLEGENLWLRGLVGDPEGGNLLTAEVRGPQCDATALGIQVAQALLDKGAGAILQKVYGEAGPQ.

Cysteine 242 carries the S-(dipyrrolylmethanemethyl)cysteine modification.

Belongs to the HMBS family. As to quaternary structure, monomer. Dipyrromethane serves as cofactor.

The catalysed reaction is 4 porphobilinogen + H2O = hydroxymethylbilane + 4 NH4(+). It functions in the pathway porphyrin-containing compound metabolism; protoporphyrin-IX biosynthesis; coproporphyrinogen-III from 5-aminolevulinate: step 2/4. Its function is as follows. Tetrapolymerization of the monopyrrole PBG into the hydroxymethylbilane pre-uroporphyrinogen in several discrete steps. The protein is Porphobilinogen deaminase of Pseudomonas fluorescens (strain SBW25).